Consider the following 400-residue polypeptide: Probable peptidoglycan glycosyltransferase FtsW (400 aa).

Over 1–24 (MSTGSLPLGLPSRDSLDGLRNSVD) the chain is Cytoplasmic. The chain crosses the membrane as a helical span at residues 25–45 (LPLLAAAALLLGLGLIMVASA). The Periplasmic portion of the chain corresponds to 46-63 (SMDLGERYYGNTWHFFQR). The chain crosses the membrane as a helical span at residues 64-84 (QVLFAAIGLALATVMWAIPLE). Topologically, residues 85-88 (RWER) are cytoplasmic. Residues 89–109 (AGPWLLILVMVLLIAVLLPGV) traverse the membrane as a helical segment. Residues 110 to 118 (GRTVNGATR) are Periplasmic-facing. A helical membrane pass occupies residues 119-139 (WIPIGMFNLQVAEPVKLLVVM). Topologically, residues 140-153 (YLAGYIVRHYSALR) are cytoplasmic. The chain crosses the membrane as a helical span at residues 154–174 (LHLRGFVRPLVVLGFGTVLLL). The Periplasmic segment spans residues 175 to 177 (LQP). A helical transmembrane segment spans residues 178 to 198 (DFGGAAIMLAIGMGMLFLAGA). A topological domain (cytoplasmic) is located at residue Lys-199. The chain crosses the membrane as a helical span at residues 200-220 (LWQFAALGATIAVGMAFVAVA). At 221–278 (APYRVARLTAFLDPWQDPFATGFQLTQSLIAIGSGGWFGTGLGNSVQKLFYLPEAHND) the chain is on the periplasmic side. Residues 279–299 (FLFAVFAEEFGFIGVLALIAL) form a helical membrane-spanning segment. Over 300–324 (FAVVVWRCVKIGLWAERAGHAFGSH) the chain is Cytoplasmic. A helical membrane pass occupies residues 325-345 (LAFGVAIWLALQSALNLAVNM). Residues 346–354 (GLLPTKGMT) lie on the Periplasmic side of the membrane. The chain crosses the membrane as a helical span at residues 355–375 (LPFLSYGGSSLIVTLMAIGLV). At 376–400 (MRVYREAQIPAPRQSTPPRRKRGQA) the chain is on the cytoplasmic side.

It belongs to the SEDS family. FtsW subfamily.

The protein localises to the cell inner membrane. The enzyme catalyses [GlcNAc-(1-&gt;4)-Mur2Ac(oyl-L-Ala-gamma-D-Glu-L-Lys-D-Ala-D-Ala)](n)-di-trans,octa-cis-undecaprenyl diphosphate + beta-D-GlcNAc-(1-&gt;4)-Mur2Ac(oyl-L-Ala-gamma-D-Glu-L-Lys-D-Ala-D-Ala)-di-trans,octa-cis-undecaprenyl diphosphate = [GlcNAc-(1-&gt;4)-Mur2Ac(oyl-L-Ala-gamma-D-Glu-L-Lys-D-Ala-D-Ala)](n+1)-di-trans,octa-cis-undecaprenyl diphosphate + di-trans,octa-cis-undecaprenyl diphosphate + H(+). It functions in the pathway cell wall biogenesis; peptidoglycan biosynthesis. Its function is as follows. Peptidoglycan polymerase that is essential for cell division. This is Probable peptidoglycan glycosyltransferase FtsW from Thioalkalivibrio sp. (strain K90mix).